The following is a 335-amino-acid chain: 3-ketodihydrosphingosine reductase TSC10 (335 aa).

9 residues coordinate NADPH: G42, S44, S45, G46, R67, D68, K71, D95, and L96. A GXSXG motif is present at residues 42 to 46; that stretch reads GGSSG. The involved in homodimer formation stretch occupies residues 141 to 207; it reads LKDGLDGVYW…RGLSDALRSE (67 aa). The Proton acceptor role is filled by Y190. NADP(+) contacts are provided by Y190, K194, and I223. The Lowers pKa of active site Tyr role is filled by K194. A helical transmembrane segment spans residues 288 to 308; it reads TNNFLLDTLWLIVSSVGVPIW.

This sequence belongs to the short-chain dehydrogenases/reductases (SDR) family. In terms of assembly, homodimer; a minor portion forms homotetramers.

Its subcellular location is the endoplasmic reticulum membrane. The catalysed reaction is sphinganine + NADP(+) = 3-oxosphinganine + NADPH + H(+). The protein operates within lipid metabolism; sphingolipid metabolism. Its function is as follows. Catalyzes the reduction of 3'-oxosphinganine (3-ketodihydrosphingosine/KDS) to sphinganine (dihydrosphingosine/DHS), the second step of de novo sphingolipid biosynthesis. In Cryptococcus neoformans var. neoformans serotype D (strain JEC21 / ATCC MYA-565) (Filobasidiella neoformans), this protein is 3-ketodihydrosphingosine reductase TSC10 (TSC10).